Here is a 535-residue protein sequence, read N- to C-terminus: Flavonoid 3'-monooxygenase CYP75B4 (535 aa).

The chain crosses the membrane as a helical span at residues I8–V28. C469 is a heme binding site.

This sequence belongs to the cytochrome P450 family. Heme serves as cofactor.

The protein localises to the membrane. It catalyses the reaction a 3'-unsubstituted flavone + reduced [NADPH--hemoprotein reductase] + O2 = a 3'-hydroxyflavone + oxidized [NADPH--hemoprotein reductase] + H2O + H(+). The protein operates within secondary metabolite biosynthesis; flavonoid biosynthesis. Functionally, catalyzes the 3'-hydroxylation of the flavonoid B-ring to the 3',4'-hydroxylated state. Catalyzes in vitro 3'-hydroxylation of different flavonoids. Catalyzes the conversion of apigenin to luteolin, naringenin to eriodictyol, and kaempferol to quercetin. Possesses specific 5'-hydroxylase activity toward chrysoeriol (a 3'-methoxylated flavone) and is indispensable for tricin formation. Converts chrysoeriol to selgin, a precursor of tricin, suggesting that chrysoeriol, instead of tricetin, is an intermediate in tricin biosynthesis. This is Flavonoid 3'-monooxygenase CYP75B4 from Oryza sativa subsp. japonica (Rice).